The following is a 287-amino-acid chain: Shikimate dehydrogenase (NADP(+)) (287 aa).

Shikimate is bound by residues 18–20 and threonine 66; that span reads SYS. Lysine 70 functions as the Proton acceptor in the catalytic mechanism. Residue glutamate 82 participates in NADP(+) binding. Residues asparagine 91 and aspartate 106 each coordinate shikimate. NADP(+) is bound by residues 130 to 134 and methionine 228; that span reads GSGGA. Tyrosine 230 contacts shikimate. Glycine 251 serves as a coordination point for NADP(+).

The protein belongs to the shikimate dehydrogenase family. Homodimer.

The enzyme catalyses shikimate + NADP(+) = 3-dehydroshikimate + NADPH + H(+). It functions in the pathway metabolic intermediate biosynthesis; chorismate biosynthesis; chorismate from D-erythrose 4-phosphate and phosphoenolpyruvate: step 4/7. Its function is as follows. Involved in the biosynthesis of the chorismate, which leads to the biosynthesis of aromatic amino acids. Catalyzes the reversible NADPH linked reduction of 3-dehydroshikimate (DHSA) to yield shikimate (SA). This is Shikimate dehydrogenase (NADP(+)) from Chlorobium chlorochromatii (strain CaD3).